The sequence spans 449 residues: RNA binding protein fox-1 homolog 2 (449 aa).

Residues 1–21 show a composition bias toward low complexity; it reads MAEGGQAQQQPPQLGPGAAAR. The interval 1–186 is disordered; it reads MAEGGQAQQQ…STPKRLHVSN (186 aa). Composition is skewed to polar residues over residues 77 to 86 and 118 to 138; these read QGNQEPTTTP and YAGQ…PHGE. The segment covering 139-176 has biased composition (low complexity); the sequence is QSSNSPSNQNGSLTQTEGGAQTDGQQSQTQSSENSESK. An RRM domain is found at 180 to 256; sequence KRLHVSNIPF…RKIEVNNATA (77 aa). Omega-N-methylarginine occurs at positions 236, 241, 268, and 273. E285 and P317 each carry asymmetric dimethylarginine. Omega-N-methylarginine occurs at positions 318, 323, 336, 340, and 341. 2 positions are modified to asymmetric dimethylarginine: R356 and R388. R440 and R445 each carry asymmetric dimethylarginine; alternate. Omega-N-methylarginine; alternate occurs at positions 440 and 445.

In terms of assembly, interacts with ER-alpha N-terminal activation domain. Interacts with RBPMS; the interaction allows cooperative assembly of stable cell-specific alternative splicing regulatory complexes. As to expression, detected in brain neurons (at protein level). Detected in heart, brain, embryo, lung, liver, kidney and ovary.

It localises to the nucleus. The protein localises to the cytoplasm. RNA-binding protein that regulates alternative splicing events by binding to 5'-UGCAUGU-3' elements. Prevents binding of U2AF2 to the 3'-splice site. Regulates alternative splicing of tissue-specific exons and of differentially spliced exons during erythropoiesis. Seems to act as a coregulatory factor of ER-alpha. Together with RNA binding proteins RBPMS and MBNL1/2, activates vascular smooth muscle cells alternative splicing events. The protein is RNA binding protein fox-1 homolog 2 (Rbfox2) of Mus musculus (Mouse).